The primary structure comprises 143 residues: Large ribosomal subunit protein uL11 (143 aa).

The protein belongs to the universal ribosomal protein uL11 family. Part of the ribosomal stalk of the 50S ribosomal subunit. Interacts with L10 and the large rRNA to form the base of the stalk. L10 forms an elongated spine to which L12 dimers bind in a sequential fashion forming a multimeric L10(L12)X complex. One or more lysine residues are methylated.

Forms part of the ribosomal stalk which helps the ribosome interact with GTP-bound translation factors. The sequence is that of Large ribosomal subunit protein uL11 from Polynucleobacter asymbioticus (strain DSM 18221 / CIP 109841 / QLW-P1DMWA-1) (Polynucleobacter necessarius subsp. asymbioticus).